Consider the following 1338-residue polypeptide: MFLMPTSSELNSGQNFLTQWMTNPSRAGVILNRGFPILEADKEKRAAVDISTSFPIKGTHFSDSFSFINEEDSLLEEQKLESNSPYKPQSDKSETHTGFPCIKKGPQVAACHSAPGHQEENKNDFIPHLASEFKEGAYKDPLFKKLEQLKEVQQKKQEQLKRQQLEQLQRLMEEQEKLLTMVSGQCTLPGLSLLPDDQSQKHRSPGNTTTGERATCCFPSYVYPDPTQEETYASNILSHEQSNFCRTAHGDFVLTSKRASPNLFSEAQYQEAPVEKNNLKEENRNHPTGESILSCWEKVTEQIQEANDKNLQKHDDSSEVANIEERPIKAAIGERKQTFEDYLEEQIQLEEQELKQKQLKEAEGPLPIKAKPKQPFLKRGEGLARFTNAKSKFQKGKESKLVTNQSTSEDQPLFKMDRQQLQRKTALKNKELCADNPILKKDSKARTKSGSVTLSQKPKMLKCSNRKSLSPSGLKIQTGKKCDGQFRDQIKFEKKVTSNNKENVPECPKPCDTGCTGWNKTQGKDRLPLSTGPASRLAAKSPIRETMKESESSLDVSLQKKLETWEREKEKENLELDEFLFLEQAADEISFSSNSSFVLKILERDQQICKGHRMSSTPVKAVPQKTNPADPISHCNRSEDLDHTAREKESECEVAPKQLHSLSSADELREQPCKIRKAVQKSTSENQTEWNARDDEGVPNSDSSTNSEEQLDVTIKPSTEDRERGISSREDSPQVCDDKGPFKDTRTQEDKRRDVDLDLSDKDYSSDESSMESIKHKVSEPSRSSSLSMSKMDFDDERTWTDLEENLCNHDVVLGNESTYGTPQTCYPNNEIGILDKTIKRKIAPVKRGEDLSKSRRSRSPPTSELMMKFFPSLKPKPKSDSHLGNEPKLNINQDQPPGDNARSQVLREKIIELETEIEKFKAENASLAKLRIERESALEKLRKEIADFEQQKAKELARIEEFKKEEMRKLQKERKVFEKYTTAARTFPDKKEREEIQTLKQQIADLREDLKRKETKWSSTHSRLRSQIEMLVRENTDLREEIKVMERFRLDAWKRAEAIESSLEVEKKDKLANTXVRFQNSQISSGTQVEKYKKNYLPMQGNPPRRSKSAPPRDLGSLDKGQAASPREPPEPLNFPDPEYKEEEDQDIQGEISHPDGKVEKVYKNGCRVILFPNGTRKEVSADGKTITVTFFNGDVKQVMPDQRVIYYYAAAQTTHTTYPEGLEVLHFSSGQIEKHYPDGRKEITFPDQTVKNLFPDGQEESIFPDGTTVRVQRDGNKLIEFNNGQRELHTAQFKRREYPDGTVKTVYANGHQETKYRSGRIRVKDKEGNVLMDTEL.

Disordered stretches follow at residues 78–99 (QKLESNSPYKPQSDKSETHTGF) and 190–211 (GLSLLPDDQSQKHRSPGNTTTG). Residues Ser260 and Ser317 each carry the phosphoserine modification. The alpha/beta-tubulin binding stretch occupies residues 320-395 (VANIEERPIK…FTNAKSKFQK (76 aa)). Disordered regions lie at residues 387 to 415 (TNAKSKFQKGKESKLVTNQSTSEDQPLFK), 437 to 480 (PILK…QTGK), and 522 to 552 (QGKDRLPLSTGPASRLAAKSPIRETMKESES). The span at 401–410 (LVTNQSTSED) shows a compositional bias: polar residues. The residue at position 541 (Ser541) is a Phosphoserine. Residues 542-551 (PIRETMKESE) are compositionally biased toward basic and acidic residues. Residues Ser590 and Ser596 each carry the phosphoserine; by PLK2 modification. Disordered regions lie at residues 612–790 (HRMS…LSMS), 846–903 (VKRG…DNAR), and 1088–1158 (TQVE…HPDG). A compositionally biased stretch (basic and acidic residues) spans 636-651 (NRSEDLDHTAREKESE). A compositionally biased stretch (polar residues) spans 680-690 (QKSTSENQTEW). Residues 718–765 (STEDRERGISSREDSPQVCDDKGPFKDTRTQEDKRRDVDLDLSDKDYS) show a composition bias toward basic and acidic residues. A Phosphoserine modification is found at Ser760. The span at 781-790 (PSRSSSLSMS) shows a compositional bias: low complexity. The tract at residues 896–1338 (QPPGDNARSQ…EGNVLMDTEL (443 aa)) is interaction with STIL.

This sequence belongs to the TCP10 family. In terms of assembly, forms homodimers. Associates with microtubules plus ends; binds to beta-tubulin subunits exposed on microtubule outer surface at its distal tip; also associates with microtubule lattice. Associated with the gamma-tubulin complex. Interacts with the head domain of EPB41. Interacts with LYST. Interacts with CEP152 (via C-terminus). Interacts with STIL. Forms a complex with STIL and SASS6. In terms of processing, phosphorylation at Ser-590 and Ser-596 by PLK2 is required for procentriole formation and centriole elongation. Phosphorylation by PLK2 oscillates during the cell cycle: it increases at G1/S transition and decreases during the exit from mitosis. Phosphorylation at Ser-596 is also mediated by PLK4 but is not a critical step in PLK4 function in procentriole assembly.

It localises to the cytoplasm. The protein resides in the cytoskeleton. The protein localises to the microtubule organizing center. It is found in the centrosome. Its subcellular location is the centriole. In terms of biological role, plays an important role in cell division and centrosome function by participating in centriole duplication. Inhibits microtubule nucleation from the centrosome. Involved in the regulation of slow processive growth of centriolar microtubules. Acts as microtubule plus-end tracking protein that stabilizes centriolar microtubules and inhibits microtubule polymerization and extension from the distal ends of centrioles. Required for centriole elongation and for STIL-mediated centriole amplification. Required for the recruitment of CEP295 to the proximal end of new-born centrioles at the centriolar microtubule wall during early S phase in a PLK4-dependent manner. May be involved in the control of centriolar-microtubule growth by acting as a regulator of tubulin release. The polypeptide is Centrosomal P4.1-associated protein (CPAP) (Pan troglodytes (Chimpanzee)).